Here is a 79-residue protein sequence, read N- to C-terminus: Small ribosomal subunit protein uS17 (79 aa).

This sequence belongs to the universal ribosomal protein uS17 family. Part of the 30S ribosomal subunit.

One of the primary rRNA binding proteins, it binds specifically to the 5'-end of 16S ribosomal RNA. This Mesorhizobium japonicum (strain LMG 29417 / CECT 9101 / MAFF 303099) (Mesorhizobium loti (strain MAFF 303099)) protein is Small ribosomal subunit protein uS17.